A 113-amino-acid chain; its full sequence is DNA-binding protein PTO0204 (113 aa).

This sequence belongs to the PDCD5 family.

The sequence is that of DNA-binding protein PTO0204 from Picrophilus torridus (strain ATCC 700027 / DSM 9790 / JCM 10055 / NBRC 100828 / KAW 2/3).